The primary structure comprises 205 residues: Latherin (205 aa).

Cysteines 133 and 176 form a disulfide.

Belongs to the BPI/LBP/Plunc superfamily. Plunc family. In terms of assembly, monomer.

It is found in the secreted. Its function is as follows. Major protein in sweat, has surfactant properties. In Equus quagga burchellii (Burchell's zebra), this protein is Latherin (LATH).